A 165-amino-acid polypeptide reads, in one-letter code: SsrA-binding protein (165 aa).

The interval 141-165 (KLHDKRENEKRKQSEREVKSALARY) is disordered. Over residues 144–159 (DKRENEKRKQSEREVK) the composition is skewed to basic and acidic residues.

This sequence belongs to the SmpB family.

The protein resides in the cytoplasm. Its function is as follows. Required for rescue of stalled ribosomes mediated by trans-translation. Binds to transfer-messenger RNA (tmRNA), required for stable association of tmRNA with ribosomes. tmRNA and SmpB together mimic tRNA shape, replacing the anticodon stem-loop with SmpB. tmRNA is encoded by the ssrA gene; the 2 termini fold to resemble tRNA(Ala) and it encodes a 'tag peptide', a short internal open reading frame. During trans-translation Ala-aminoacylated tmRNA acts like a tRNA, entering the A-site of stalled ribosomes, displacing the stalled mRNA. The ribosome then switches to translate the ORF on the tmRNA; the nascent peptide is terminated with the 'tag peptide' encoded by the tmRNA and targeted for degradation. The ribosome is freed to recommence translation, which seems to be the essential function of trans-translation. The protein is SsrA-binding protein of Prochlorococcus marinus (strain SARG / CCMP1375 / SS120).